Here is a 248-residue protein sequence, read N- to C-terminus: tRNA (guanine-N(1)-)-methyltransferase (248 aa).

Residues Gly-116 and 136-141 each bind S-adenosyl-L-methionine; that span reads VGDYVL.

Belongs to the RNA methyltransferase TrmD family. Homodimer.

It localises to the cytoplasm. The catalysed reaction is guanosine(37) in tRNA + S-adenosyl-L-methionine = N(1)-methylguanosine(37) in tRNA + S-adenosyl-L-homocysteine + H(+). Specifically methylates guanosine-37 in various tRNAs. In Psychromonas ingrahamii (strain DSM 17664 / CCUG 51855 / 37), this protein is tRNA (guanine-N(1)-)-methyltransferase.